Reading from the N-terminus, the 1576-residue chain is DNA-directed RNA polymerase subunit beta' (1576 aa).

Residues Cys-64, Cys-66, Cys-79, and Cys-82 each contribute to the Zn(2+) site. Residues Asp-590, Asp-592, and Asp-594 each coordinate Mg(2+). Zn(2+)-binding residues include Cys-928, Cys-1002, Cys-1009, and Cys-1012.

Belongs to the RNA polymerase beta' chain family. In terms of assembly, the RNAP catalytic core consists of 2 alpha, 1 beta, 1 beta' and 1 omega subunit. When a sigma factor is associated with the core the holoenzyme is formed, which can initiate transcription. The cofactor is Mg(2+). Zn(2+) is required as a cofactor.

It carries out the reaction RNA(n) + a ribonucleoside 5'-triphosphate = RNA(n+1) + diphosphate. DNA-dependent RNA polymerase catalyzes the transcription of DNA into RNA using the four ribonucleoside triphosphates as substrates. This chain is DNA-directed RNA polymerase subunit beta', found in Aquifex pyrophilus.